The primary structure comprises 250 residues: Protein lin-28 homolog B (250 aa).

Disordered stretches follow at residues 1–27 and 98–126; these read MAEA…ESPL and RVTG…KPKG. Residues 9 to 18 are compositionally biased toward basic and acidic residues; that stretch reads GGEEPGRLPE. The 74-residue stretch at 29–102 folds into the CSD domain; sequence HGAGHCKWFN…GLESIRVTGP (74 aa). The segment covering 114 to 125 has biased composition (basic residues); the sequence is PKGKTVQKRKPK. CCHC-type zinc fingers lie at residues 127–144 and 149–166; these read DRCY…ECSL and KKCH…NCPH. Zn(2+) is bound by residues C129, C132, H137, C142, C151, C154, H159, and C164. The segment at 165–250 is disordered; sequence PHKTVSQQPT…GPSVQKRKKT (86 aa). The segment covering 168–177 has biased composition (polar residues); sequence TVSQQPTSSQ. Residues 200–209 show a composition bias toward low complexity; it reads GYSSPSYSQE. Basic and acidic residues predominate over residues 210–219; that stretch reads GRSEISERSG.

The protein belongs to the lin-28 family.

Its subcellular location is the nucleus. The protein resides in the nucleolus. In terms of biological role, suppressor of specific microRNA (miRNA) biogenesis. Binds target primary miRNA transcripts and sequester them in the nucleolus, away from the microprocessor complex, hence preventing their processing into mature miRNA. The specific interaction with target pri-miRNAs occurs via an 5'-GGAG-3' motif in the pre-miRNA terminal loop. The polypeptide is Protein lin-28 homolog B (LIN28B) (Gallus gallus (Chicken)).